The chain runs to 374 residues: MMTDNSKTRVVVGMSGGVDSSVTALLLKEQGYDVIGVFMKNWDDTDEFGVCTATEDYKDVAAVADQIGIPYYSVNFEKEYWDRVFEYFLAEYRSGRTPNPDVMCNKEIKFKAFLDYAMTLGADYVATGHYAQIKRDENGVVHMLRGFDKGKDQTYFLSQLSQKQLQKTMFPLGHLQKSEVRAIAEQAGLATAKKKDSTGICFIGEKNFKTFLSHYLPAQKGRMMTVDGRDMGEHAGLMYYTIGQRGGLGIGGQQGGDNKPWFVVGKDLSQNILYVGQGFYHESLMSTSLDASVIQFTREVPEEFTLECTAKFRYRQPDSKVTVHVKKDKAKVVFAEPQRAITPGQAVVFYDGHECLGGGIIDMAYKDGEPCQYI.

Residues 13–20 (GMSGGVDS) and Met39 contribute to the ATP site. The tract at residues 99-101 (NPD) is interaction with target base in tRNA. Cys104 (nucleophile) is an active-site residue. Cys104 and Cys201 form a disulfide bridge. Gly128 contributes to the ATP binding site. The interaction with tRNA stretch occupies residues 151 to 153 (KDQ). Residue Cys201 is the Cysteine persulfide intermediate of the active site. Residues 313–314 (RY) form an interaction with tRNA region.

Belongs to the MnmA/TRMU family.

The protein localises to the cytoplasm. The catalysed reaction is S-sulfanyl-L-cysteinyl-[protein] + uridine(34) in tRNA + AH2 + ATP = 2-thiouridine(34) in tRNA + L-cysteinyl-[protein] + A + AMP + diphosphate + H(+). Catalyzes the 2-thiolation of uridine at the wobble position (U34) of tRNA, leading to the formation of s(2)U34. This chain is tRNA-specific 2-thiouridylase MnmA, found in Streptococcus equi subsp. zooepidemicus (strain H70).